The primary structure comprises 316 residues: Ribosomal RNA small subunit methyltransferase H (316 aa).

S-adenosyl-L-methionine-binding positions include 35–37 (SGH), aspartate 55, phenylalanine 84, aspartate 105, and glutamine 112.

It belongs to the methyltransferase superfamily. RsmH family.

The protein resides in the cytoplasm. The catalysed reaction is cytidine(1402) in 16S rRNA + S-adenosyl-L-methionine = N(4)-methylcytidine(1402) in 16S rRNA + S-adenosyl-L-homocysteine + H(+). Functionally, specifically methylates the N4 position of cytidine in position 1402 (C1402) of 16S rRNA. The polypeptide is Ribosomal RNA small subunit methyltransferase H (Streptococcus dysgalactiae subsp. equisimilis (strain GGS_124)).